A 260-amino-acid polypeptide reads, in one-letter code: Taurine import ATP-binding protein TauB (260 aa).

The ABC transporter domain maps to 6–235 (AHQVSVVYAS…RYAAGESMRS (230 aa)). 40–47 (GASGCGKS) contacts ATP.

Belongs to the ABC transporter superfamily. Taurine importer (TC 3.A.1.17.1) family. As to quaternary structure, the complex is composed of two ATP-binding proteins (TauB), two transmembrane proteins (TauC) and a solute-binding protein (TauA).

It is found in the cell inner membrane. The enzyme catalyses taurine(out) + ATP + H2O = taurine(in) + ADP + phosphate + H(+). In terms of biological role, part of the ABC transporter complex TauABC involved in taurine import. Responsible for energy coupling to the transport system. The protein is Taurine import ATP-binding protein TauB of Burkholderia thailandensis (strain ATCC 700388 / DSM 13276 / CCUG 48851 / CIP 106301 / E264).